A 255-amino-acid chain; its full sequence is Pimeloyl-[acyl-carrier protein] methyl ester esterase (255 aa).

Residues tryptophan 18, 78–79, and 139–143 contribute to the substrate site; these read SL and FLALD. Catalysis depends on serine 78, which acts as the Nucleophile. Residues aspartate 203 and histidine 233 contribute to the active site. Histidine 233 contacts substrate.

It belongs to the AB hydrolase superfamily. Carboxylesterase BioH family. In terms of assembly, monomer.

The protein localises to the cytoplasm. The enzyme catalyses 6-carboxyhexanoyl-[ACP] methyl ester + H2O = 6-carboxyhexanoyl-[ACP] + methanol + H(+). It participates in cofactor biosynthesis; biotin biosynthesis. Its function is as follows. The physiological role of BioH is to remove the methyl group introduced by BioC when the pimeloyl moiety is complete. It allows to synthesize pimeloyl-ACP via the fatty acid synthetic pathway through the hydrolysis of the ester bonds of pimeloyl-ACP esters. The protein is Pimeloyl-[acyl-carrier protein] methyl ester esterase of Xylella fastidiosa (strain M23).